We begin with the raw amino-acid sequence, 254 residues long: 14-3-3-like protein RA215 (254 aa).

This sequence belongs to the 14-3-3 family.

The polypeptide is 14-3-3-like protein RA215 (Solanum tuberosum (Potato)).